Reading from the N-terminus, the 154-residue chain is Protein MGF 300-2R (154 aa).

The protein belongs to the asfivirus MGF 300 family.

Functionally, plays a role in virus cell tropism, and may be required for efficient virus replication in macrophages. In Ornithodoros (relapsing fever ticks), this protein is Protein MGF 300-2R.